Reading from the N-terminus, the 616-residue chain is Glycogenin-1 (616 aa).

Leu-10, Tyr-16, and Arg-95 together coordinate UDP. 11 residues coordinate UDP-alpha-D-glucose: Leu-10, Tyr-16, Arg-95, Lys-104, Asp-120, Asp-122, Asn-158, Ser-159, Asp-185, Asp-188, and Gln-189. UDP contacts are provided by Asp-120 and Asp-122. Mn(2+) is bound by residues Asp-120 and Asp-122. The O-linked (Glc...) tyrosine glycan is linked to Tyr-230. 3 residues coordinate UDP: His-247, Gly-250, and Lys-253. His-247 lines the Mn(2+) pocket. The UDP-alpha-D-glucose site is built by Gly-250 and Lys-253. Over residues 283–302 (HQLNNEVSKPKISDSDKTET) the composition is skewed to basic and acidic residues. Disordered regions lie at residues 283-320 (HQLN…PTTN), 335-354 (NQNA…NPVP), 371-525 (TNQP…EKDK), and 553-588 (RDAT…EMPN). The segment covering 377 to 386 (ESREYSKEND) has biased composition (basic and acidic residues). A compositionally biased stretch (polar residues) spans 400–419 (SPPNSTQELNSSYSVVSTQA). Low complexity predominate over residues 450–461 (STAASSNNNVSN). 2 stretches are compositionally biased toward polar residues: residues 462 to 485 (QPDG…PSNP) and 492 to 503 (DNIQKPSVSTND). Basic and acidic residues predominate over residues 567–576 (DKQEDMKLTA). Polar residues predominate over residues 577–586 (EETNQPQQEM). Tyr-598 is a glycosylation site (O-linked (Glc...) tyrosine).

It belongs to the glycosyltransferase 8 family. Glycogenin subfamily. The cofactor is Mn(2+).

Its subcellular location is the cytoplasm. The protein resides in the vacuole. It catalyses the reaction L-tyrosyl-[glycogenin] + UDP-alpha-D-glucose = alpha-D-glucosyl-L-tyrosyl-[glycogenin] + UDP + H(+). The enzyme catalyses [1,4-alpha-D-glucosyl](n)-L-tyrosyl-[glycogenin] + UDP-alpha-D-glucose = [1,4-alpha-D-glucosyl](n+1)-L-tyrosyl-[glycogenin] + UDP + H(+). Its function is as follows. Self-glucosylating initiator of glycogen synthesis. It catalyzes the formation of a short alpha (1,4)-glucosyl chain covalently attached via a glucose 1-O-tyrosyl linkage to internal tyrosine residues and these chains act as primers for the elongation reaction catalyzed by glycogen synthase. Capable of transferring glucosyl residues to unbound acceptors such as free oligoglucans or oligoglucan derivatives. In Saccharomyces cerevisiae (strain ATCC 204508 / S288c) (Baker's yeast), this protein is Glycogenin-1.